An 868-amino-acid polypeptide reads, in one-letter code: Leucine--tRNA ligase (868 aa).

A 'HIGH' region motif is present at residues 42–52 (PYPSGKLHMGH). A 'KMSKS' region motif is present at residues 627–631 (KMSKS). Residue Lys630 coordinates ATP.

It belongs to the class-I aminoacyl-tRNA synthetase family.

It is found in the cytoplasm. The enzyme catalyses tRNA(Leu) + L-leucine + ATP = L-leucyl-tRNA(Leu) + AMP + diphosphate. This Pseudomonas syringae pv. syringae (strain B728a) protein is Leucine--tRNA ligase.